The following is a 636-amino-acid chain: DNA-dependent metalloprotease SPRTN (636 aa).

Residues 19 to 42 (QETPAAGWPDEDCPSSKRRRVDPS) are disordered. The SprT-like domain occupies 76 to 183 (RAMFLQFNDK…ASGTNITIYH (108 aa)). Position 141 (His-141) interacts with Zn(2+). The active site involves Glu-142. Zn(2+) contacts are provided by His-145 and His-160. Disordered stretches follow at residues 238–382 (TYTK…GKQR) and 398–430 (RGAS…PSGK). Over residues 241–268 (KIKEPENYGKTGKSDKQRDKMPATEMPK) the composition is skewed to basic and acidic residues. Over residues 272-281 (PPSSTSSSGS) the composition is skewed to low complexity. The SHP-box motif lies at 290–298 (FSGRGFVLG). Over residues 302–311 (QIPTNKQIQS) the composition is skewed to polar residues. Pro residues predominate over residues 313–327 (PKAPPEPLHSPPDSP). Over residues 341–374 (RLSSGTSNIPRKRSVGNTNAFINVNGSPVRISNG) the composition is skewed to polar residues. Over residues 399 to 416 (GASAVGSSKSSTDASTAD) the composition is skewed to low complexity. Residues 451–458 (ESNISKYF) carry the PIP-box motif. The tract at residues 473-608 (TFGSPQKSAI…VRDQQANNPP (136 aa)) is disordered. Composition is skewed to polar residues over residues 492–523 (FGSN…SGSS) and 545–554 (SPRTSGTTPS). Positions 535–566 (SNFPSPRNIGSPRTSGTTPSGAKKRSWEEHNS) match the Nuclear localization signal motif. Composition is skewed to basic and acidic residues over residues 559 to 570 (RSWEEHNSERVF) and 584 to 593 (TDKKREEVRS). The UBZ4-type zinc finger occupies 612-636 (TVHCPVCHIRLPESTINDHLDSCLL). Positions 615, 618, 630, and 634 each coordinate Zn(2+).

The protein belongs to the Spartan family. As to quaternary structure, homodimer. Zn(2+) is required as a cofactor. Autocatalytically cleaved in response to double-stranded DNA-binding: autocatalytic cleavage takes place in trans and leads to inactivation.

It is found in the nucleus. The protein localises to the chromosome. With respect to regulation, DNA-binding activates the protease activity: single-stranded DNA-binding specifically activates ability to cleave covalent DNA-protein cross-links (DPCs). In contrast, double-stranded DNA-binding specifically activates autocatalytic cleavage, and subsequent inactivation. DNA-dependent metalloendopeptidase that mediates the proteolytic cleavage of covalent DNA-protein cross-links (DPCs) during DNA synthesis, thereby playing a key role in maintaining genomic integrity. DPCs are highly toxic DNA lesions that interfere with essential chromatin transactions, such as replication and transcription, and which are induced by reactive agents, such as UV light or formaldehyde. Associates with the DNA replication machinery and specifically removes DPCs during DNA synthesis. Catalyzes proteolytic cleavage of the hmces DNA-protein cross-link following unfolding by the brip1/fancj helicase. Acts as a pleiotropic protease for DNA-binding proteins cross-linked with DNA, such as top1, top2a, histones H3 and H4. Mediates degradation of DPCs that are not ubiquitinated, while it is not able to degrade ubiquitinated DPCs. SPRTN activation requires polymerase collision with DPCs followed by helicase bypass of DPCs. May also act as a 'reader' of ubiquitinated pcna: facilitates chromatin association of rad18 and is required for efficient pcna monoubiquitination, promoting a feed-forward loop to enhance pcna ubiquitination and translesion DNA synthesis. Acts as a regulator of translesion DNA synthesis by recruiting vcp/p97 to sites of DNA damage. The polypeptide is DNA-dependent metalloprotease SPRTN (Danio rerio (Zebrafish)).